We begin with the raw amino-acid sequence, 474 residues long: Transmembrane transporter FVEG_12640 (474 aa).

Residues 1–15 are compositionally biased toward polar residues; that stretch reads MASPTISSMEQYTPS. A disordered region spans residues 1 to 39; the sequence is MASPTISSMEQYTPSSKDEKIVPLHGDAAGSDTEKGESR. The next 10 helical transmembrane spans lie at 72-92, 133-153, 164-184, 192-212, 231-251, 275-295, 317-337, 364-384, 387-407, and 431-451; these read ILAIPGALGALGSVGGSLCIV, LVGVQIIVAQVLISAGGIVTS, GTCTVMFALVSAILITLFSSI, WLTWFGFITFVLGVFIFVVAV, WAPIAYPSFVVGMINATNIFI, ACLVAGFIVGAMYLSFSLVIY, VAYGVSLPGLILGVGIYQHVA, LGINLALGTAAFIVAEAVPIL, LLGLAGSLCFAPFSLVFPALL, and LIMILGFYMIVAGTYSVAVLI.

The protein belongs to the amino acid/polyamine transporter 2 family.

It localises to the membrane. Its function is as follows. Transmembrane transporter; part of the Fusarium detoxification of benzoxazolinone cluster 2 (FDB2) involved in the degradation of benzoxazolinones produced by the host plant. Maize, wheat, and rye produce the 2 benzoxazinone phytoanticipins 2,4-dihy-droxy-7-methoxy-1,4-benzoxazin-3-one (DIMBOA) and 2,4-dihydroxy-1,4-benzoxazin-3-one (DIBOA) that, due to their inherent instability once released, spontaneously degrade to the more stable corresponding benzoxazolinones, 6-methoxy-2-benzoxazolinone (MBOA) and 2-benzoxazolinone (BOA), respectively. Might be involved in the transport of metabolites of benzoxazolinone degradation. This chain is Transmembrane transporter FVEG_12640, found in Gibberella moniliformis (strain M3125 / FGSC 7600) (Maize ear and stalk rot fungus).